We begin with the raw amino-acid sequence, 251 residues long: Ubiquinone/menaquinone biosynthesis C-methyltransferase UbiE (251 aa).

Residues T74, D95, and 123–124 (NA) each bind S-adenosyl-L-methionine.

This sequence belongs to the class I-like SAM-binding methyltransferase superfamily. MenG/UbiE family.

It carries out the reaction a 2-demethylmenaquinol + S-adenosyl-L-methionine = a menaquinol + S-adenosyl-L-homocysteine + H(+). The catalysed reaction is a 2-methoxy-6-(all-trans-polyprenyl)benzene-1,4-diol + S-adenosyl-L-methionine = a 5-methoxy-2-methyl-3-(all-trans-polyprenyl)benzene-1,4-diol + S-adenosyl-L-homocysteine + H(+). It functions in the pathway quinol/quinone metabolism; menaquinone biosynthesis; menaquinol from 1,4-dihydroxy-2-naphthoate: step 2/2. Its pathway is cofactor biosynthesis; ubiquinone biosynthesis. In terms of biological role, methyltransferase required for the conversion of demethylmenaquinol (DMKH2) to menaquinol (MKH2) and the conversion of 2-polyprenyl-6-methoxy-1,4-benzoquinol (DDMQH2) to 2-polyprenyl-3-methyl-6-methoxy-1,4-benzoquinol (DMQH2). In Shewanella woodyi (strain ATCC 51908 / MS32), this protein is Ubiquinone/menaquinone biosynthesis C-methyltransferase UbiE.